The chain runs to 456 residues: CBL-interacting serine/threonine-protein kinase 2 (456 aa).

The region spanning 12–266 is the Protein kinase domain; sequence YEVGRLLGQG…IAKIKESSWF (255 aa). ATP is bound by residues 18-26 and K41; that span reads LGQGTFAKV. The active-site Proton acceptor is D134. The activation loop stretch occupies residues 152-181; sequence DFGLSALADCKRQDGLLHTTCGTPAYVAPE. A Phosphoserine modification is found at S156. The residue at position 170 (T170) is a Phosphothreonine. The segment at 280–309 is disordered; that stretch reads MEKQQVREATNPMEAGGSGQNENGENHEPP. The NAF domain occupies 309–333; that stretch reads PRLATLNAFDIIALSTGFGLAGLFG. Positions 338–367 are PPI; it reads KRESRFASQKPASEIISKLVEVAKCLKLKI.

This sequence belongs to the protein kinase superfamily. CAMK Ser/Thr protein kinase family. SNF1 subfamily. Interacts with CBL2, CBL3 and CBL5. It depends on Mn(2+) as a cofactor.

The enzyme catalyses L-seryl-[protein] + ATP = O-phospho-L-seryl-[protein] + ADP + H(+). It catalyses the reaction L-threonyl-[protein] + ATP = O-phospho-L-threonyl-[protein] + ADP + H(+). Functionally, CIPK serine-threonine protein kinases interact with CBL proteins. Binding of a CBL protein to the regulatory NAF domain of CIPK protein lead to the activation of the kinase in a calcium-dependent manner. This is CBL-interacting serine/threonine-protein kinase 2 (CIPK2) from Arabidopsis thaliana (Mouse-ear cress).